Reading from the N-terminus, the 262-residue chain is MIDQSAFIHPSAIVEDGAIIHADVHVGPFCVIGPQVEIGARTVLESHVVVTGITRIGEDNQIYPFASLGDVNQDLKYAGEPTRVEIGHRNRIRESVTIHRGTIQGGEVTRVGSDNLLMVNAHVAHDCTVGSHCIMANNATLGGHVAVDDYAIIGGMTAVHQFCVIGAYVMVGGCSGVAQDVPPFVIAQGNHATPFGLNIEGLKRRGFDHAALHAIRAAYKIIYRSGKTLDEAKPELQALAQEHQVVNTFLDFLLRSQRGIIR.

Belongs to the transferase hexapeptide repeat family. LpxA subfamily. Homotrimer.

It is found in the cytoplasm. It catalyses the reaction a (3R)-hydroxyacyl-[ACP] + UDP-N-acetyl-alpha-D-glucosamine = a UDP-3-O-[(3R)-3-hydroxyacyl]-N-acetyl-alpha-D-glucosamine + holo-[ACP]. The protein operates within glycolipid biosynthesis; lipid IV(A) biosynthesis; lipid IV(A) from (3R)-3-hydroxytetradecanoyl-[acyl-carrier-protein] and UDP-N-acetyl-alpha-D-glucosamine: step 1/6. Its function is as follows. Involved in the biosynthesis of lipid A, a phosphorylated glycolipid that anchors the lipopolysaccharide to the outer membrane of the cell. This chain is Acyl-[acyl-carrier-protein]--UDP-N-acetylglucosamine O-acyltransferase, found in Sodalis glossinidius (strain morsitans).